We begin with the raw amino-acid sequence, 249 residues long: Probable septum site-determining protein MinC (249 aa).

A disordered region spans residues 89–130 (SLFEPGMPPAMKGGRPAPDFEVPEVDPADPPKAGKGKAAAPI). A compositionally biased stretch (low complexity) spans 119-129 (PKAGKGKAAAP).

This sequence belongs to the MinC family. Interacts with MinD and FtsZ.

In terms of biological role, cell division inhibitor that blocks the formation of polar Z ring septums. Rapidly oscillates between the poles of the cell to destabilize FtsZ filaments that have formed before they mature into polar Z rings. Prevents FtsZ polymerization. The sequence is that of Probable septum site-determining protein MinC from Rhizobium meliloti (strain 1021) (Ensifer meliloti).